We begin with the raw amino-acid sequence, 419 residues long: MSENLWKKALELFAGGVNSPVRAAVKPYPFYVEKSEGAFLYTIDGQRLIDYVLGYGPLILGHAHPYVKKKIIEQIEKGWLYGTPSKKEIELAEKIRSHIPSAEKIRFVNSGTEATMLAIRLARGYTKREKILKFDGNYHGAHDYALINAGSAVSEFNVIISSGIPTSIINTVIVCKYNDLDCVEKHLRTEEIAGVIVEPVMGNMGVILPEQDFLNGLRELTKTYNSVLIFDEVITGFRLGLSGAQGYFKVIPDLTTLGKIIGGGLPIGAVTGKKEIMSNLTPEGKVFNAGTFNANPLTMAAGIATIEVLETTNAYDIANKASKEIAEELDNSLSKKNFKYTINRIQSMFQFFIGISKVTNADDARLANKDLYVKIHEKLLKLGVFIPPSQFETIFTSSSHSDEIVNLTIEAIHKVVSEI.

An N6-(pyridoxal phosphate)lysine modification is found at Lys-259.

The protein belongs to the class-III pyridoxal-phosphate-dependent aminotransferase family. HemL subfamily. Pyridoxal 5'-phosphate serves as cofactor.

It is found in the cytoplasm. The catalysed reaction is (S)-4-amino-5-oxopentanoate = 5-aminolevulinate. It participates in porphyrin-containing compound metabolism; protoporphyrin-IX biosynthesis; 5-aminolevulinate from L-glutamyl-tRNA(Glu): step 2/2. The chain is Glutamate-1-semialdehyde 2,1-aminomutase (hemL) from Sulfurisphaera tokodaii (strain DSM 16993 / JCM 10545 / NBRC 100140 / 7) (Sulfolobus tokodaii).